Reading from the N-terminus, the 424-residue chain is Serine--tRNA ligase (424 aa).

232-234 is a binding site for L-serine; that stretch reads TAE. Residue 263–265 participates in ATP binding; it reads RQE. Glutamate 286 contacts L-serine. 350-353 contacts ATP; the sequence is EIGS. Residue serine 386 participates in L-serine binding.

It belongs to the class-II aminoacyl-tRNA synthetase family. Type-1 seryl-tRNA synthetase subfamily. As to quaternary structure, homodimer. The tRNA molecule binds across the dimer.

The protein localises to the cytoplasm. It carries out the reaction tRNA(Ser) + L-serine + ATP = L-seryl-tRNA(Ser) + AMP + diphosphate + H(+). The enzyme catalyses tRNA(Sec) + L-serine + ATP = L-seryl-tRNA(Sec) + AMP + diphosphate + H(+). Its pathway is aminoacyl-tRNA biosynthesis; selenocysteinyl-tRNA(Sec) biosynthesis; L-seryl-tRNA(Sec) from L-serine and tRNA(Sec): step 1/1. Catalyzes the attachment of serine to tRNA(Ser). Is also able to aminoacylate tRNA(Sec) with serine, to form the misacylated tRNA L-seryl-tRNA(Sec), which will be further converted into selenocysteinyl-tRNA(Sec). This is Serine--tRNA ligase from Aster yellows witches'-broom phytoplasma (strain AYWB).